We begin with the raw amino-acid sequence, 1426 residues long: ABC transporter G family member 31 (1426 aa).

One can recognise an ABC transporter 1 domain in the interval 142–415 (LRHLRIYRGG…FAGMGFRCPE (274 aa)). 175-182 (GPPSSGKT) serves as a coordination point for ATP. An ABC transmembrane type-2 1 domain is found at 493-706 (ELLKSNFQWQ…AQNAISVNEF (214 aa)). 7 consecutive transmembrane segments (helical) span residues 511–531 (FIYV…MTVF), 544–564 (GIIY…NGFT), 592–612 (LPSW…WVLV), 630–650 (FLLL…MASL), 655–675 (IVAN…GGFI), 681–701 (IPAW…QNAI), and 741–761 (IGVG…TLFL). The ABC transporter 2 domain maps to 824–1076 (MCFKNINYYV…NLVEFFEAIP (253 aa)). 869–876 (GVSGAGKT) lines the ATP pocket. The region spanning 1149–1363 (AQYAACLWKQ…TLYGLLTSQF (215 aa)) is the ABC transmembrane type-2 2 domain. The next 7 membrane-spanning stretches (helical) occupy residues 1168–1188 (YTAV…TICW), 1200–1220 (IFNA…TNAT), 1245–1265 (LPFA…QSLI), 1283–1303 (FLWY…YGMM), 1313–1333 (VAPI…GFMI), 1341–1363 (WWRW…TSQF), and 1398–1418 (VVAG…ALAI).

This sequence belongs to the ABC transporter superfamily. ABCG family. PDR (TC 3.A.1.205) subfamily.

It is found in the membrane. Its function is as follows. May be a general defense protein. In Oryza sativa subsp. japonica (Rice), this protein is ABC transporter G family member 31.